Here is a 79-residue protein sequence, read N- to C-terminus: Sulfur carrier protein TusA (79 aa).

Cys17 serves as the catalytic Cysteine persulfide intermediate.

This sequence belongs to the sulfur carrier protein TusA family.

The protein resides in the cytoplasm. Its function is as follows. Sulfur carrier protein which probably makes part of a sulfur-relay system. The sequence is that of Sulfur carrier protein TusA from Pseudoalteromonas translucida (strain TAC 125).